The following is a 318-amino-acid chain: METSDRISPGGGIGAEVPSAYHMAPRPSDSPANQFMGLSLPPMEAPMPSSGEASGKKRRGRPRKYEANGAPLPSSSVPLVKKRVRGKLNGFDMKKMHKTIGFHSSGERFGVGGGVGGGVGSNFTPHVITVNTGEDITMRIISFSQQGPRAICILSANGVISNVTLRQPDSCGGTLTYEGRFEILSLSGSFMETENQGSKGRSGGMSVSLAGPDGRVVGGGVAGLLIAATPIQVVVGSFITSDQQDHQKPRKQRVEHAPAAVMSVPPPPSPPPPAASVFSPTNPDREQPPSSFGISSWTNGQDMPRNSATDINISLPVD.

2 disordered regions span residues 1-76 (METS…PSSS) and 241-318 (SDQQ…LPVD). Positions 56 to 64 (KKRRGRPRK) match the Bipartite nuclear localization signal motif. The a.T hook DNA-binding region spans 56–68 (KKRRGRPRKYEAN). The PPC domain occupies 120-259 (GSNFTPHVIT…RKQRVEHAPA (140 aa)). Basic and acidic residues predominate over residues 243 to 256 (QQDHQKPRKQRVEH). The span at 264–274 (VPPPPSPPPPA) shows a compositional bias: pro residues. Positions 288-312 (PPSSFGISSWTNGQDMPRNSATDIN) are enriched in polar residues.

It is found in the nucleus. In terms of biological role, transcription factor that specifically binds AT-rich DNA sequences related to the nuclear matrix attachment regions (MARs). This is AT-hook motif nuclear-localized protein 7 from Arabidopsis thaliana (Mouse-ear cress).